The following is a 95-amino-acid chain: Co-chaperonin GroES (95 aa).

Belongs to the GroES chaperonin family. As to quaternary structure, heptamer of 7 subunits arranged in a ring. Interacts with the chaperonin GroEL.

It localises to the cytoplasm. Functionally, together with the chaperonin GroEL, plays an essential role in assisting protein folding. The GroEL-GroES system forms a nano-cage that allows encapsulation of the non-native substrate proteins and provides a physical environment optimized to promote and accelerate protein folding. GroES binds to the apical surface of the GroEL ring, thereby capping the opening of the GroEL channel. This Stenotrophomonas maltophilia (strain R551-3) protein is Co-chaperonin GroES.